The sequence spans 264 residues: Major prion protein 1 (264 aa).

A signal peptide spans 1–24 (MVKSHIGSWILVLFVAMWSDVALC). The tract at residues 25–241 (KKRPKPGGGW…ESEAYYQRGA (217 aa)) is interaction with GRB2, ERI3 and SYN1. Residues 28-118 (PKPGGGWNTG…QWNKPSKPKT (91 aa)) form a disordered region. Repeat copies occupy residues 54 to 62 (SQGGGGWGQ), 63 to 70 (PHGGGWGQ), 71 to 78 (PHGGGWGQ), 79 to 86 (PHGGGWGQ), 87 to 94 (PHGGGWGQ), and 95 to 103 (PHGGGGWGQ). Residues 54–103 (SQGGGGWGQPHGGGWGQPHGGGWGQPHGGGWGQPHGGGWGQPHGGGGWGQ) form a 6 X 8 AA tandem repeats of P-H-G-G-G-W-G-Q region. Residues 55 to 107 (QGGGGWGQPHGGGWGQPHGGGWGQPHGGGWGQPHGGGWGQPHGGGGWGQGGTH) are compositionally biased toward gly residues. Positions 72, 73, 74, 80, 81, 82, 88, 89, 90, 96, 98, and 99 each coordinate Cu(2+). Cys190 and Cys225 are joined by a disulfide. N-linked (GlcNAc...) asparagine glycosylation is found at Asn192 and Asn208. Ala241 carries GPI-anchor amidated alanine lipidation. A propeptide spans 242–264 (SVILFSSPPVILLISFLIFLIVG) (removed in mature form).

This sequence belongs to the prion family. Monomer and homodimer. Has a tendency to aggregate into amyloid fibrils containing a cross-beta spine, formed by a steric zipper of superposed beta-strands. Soluble oligomers may represent an intermediate stage on the path to fibril formation. Copper binding may promote oligomerization. Interacts with GRB2, APP, ERI3/PRNPIP and SYN1. Mislocalized cytosolically exposed PrP interacts with MGRN1; this interaction alters MGRN1 subcellular location and causes lysosomal enlargement. Interacts with KIAA1191.

It localises to the cell membrane. Its subcellular location is the golgi apparatus. Functionally, its primary physiological function is unclear. Has cytoprotective activity against internal or environmental stresses. May play a role in neuronal development and synaptic plasticity. May be required for neuronal myelin sheath maintenance. May play a role in iron uptake and iron homeostasis. Soluble oligomers are toxic to cultured neuroblastoma cells and induce apoptosis (in vitro). Association with GPC1 (via its heparan sulfate chains) targets PRNP to lipid rafts. Also provides Cu(2+) or Zn(2+) for the ascorbate-mediated GPC1 deaminase degradation of its heparan sulfate side chains. This is Major prion protein 1 from Tragelaphus strepsiceros (Greater kudu).